A 428-amino-acid polypeptide reads, in one-letter code: UDP-N-acetylglucosamine 1-carboxyvinyltransferase 2 (428 aa).

Residue 22–23 (KN) participates in phosphoenolpyruvate binding. Residue Arg-92 participates in UDP-N-acetyl-alpha-D-glucosamine binding. The active-site Proton donor is the Cys-116. The residue at position 116 (Cys-116) is a 2-(S-cysteinyl)pyruvic acid O-phosphothioketal. Residues 121-125 (RPIDQ), Asp-304, and Ile-326 contribute to the UDP-N-acetyl-alpha-D-glucosamine site.

Belongs to the EPSP synthase family. MurA subfamily.

The protein resides in the cytoplasm. The catalysed reaction is phosphoenolpyruvate + UDP-N-acetyl-alpha-D-glucosamine = UDP-N-acetyl-3-O-(1-carboxyvinyl)-alpha-D-glucosamine + phosphate. Its pathway is cell wall biogenesis; peptidoglycan biosynthesis. Cell wall formation. Adds enolpyruvyl to UDP-N-acetylglucosamine. This chain is UDP-N-acetylglucosamine 1-carboxyvinyltransferase 2, found in Oceanobacillus iheyensis (strain DSM 14371 / CIP 107618 / JCM 11309 / KCTC 3954 / HTE831).